The sequence spans 269 residues: Putative imidazole glycerol phosphate synthase subunit hisF2 (269 aa).

Residue aspartate 133 is part of the active site.

It belongs to the HisA/HisF family. Heterodimer of HisH and HisF.

The protein localises to the cytoplasm. The enzyme catalyses 5-[(5-phospho-1-deoxy-D-ribulos-1-ylimino)methylamino]-1-(5-phospho-beta-D-ribosyl)imidazole-4-carboxamide + L-glutamine = D-erythro-1-(imidazol-4-yl)glycerol 3-phosphate + 5-amino-1-(5-phospho-beta-D-ribosyl)imidazole-4-carboxamide + L-glutamate + H(+). It participates in amino-acid biosynthesis; L-histidine biosynthesis; L-histidine from 5-phospho-alpha-D-ribose 1-diphosphate: step 5/9. Its function is as follows. IGPS catalyzes the conversion of PRFAR and glutamine to IGP, AICAR and glutamate. The HisF subunit catalyzes the cyclization activity that produces IGP and AICAR from PRFAR using the ammonia provided by the HisH subunit. The polypeptide is Putative imidazole glycerol phosphate synthase subunit hisF2 (hisF2) (Parasynechococcus marenigrum (strain WH8102)).